Here is a 22-residue protein sequence, read N- to C-terminus: Pectinesterase (22 aa).

Asp-6 functions as the Proton donor in the catalytic mechanism. Substrate-binding residues include Arg-19 and Trp-21.

The protein belongs to the pectinesterase family.

It is found in the secreted. It localises to the cell wall. The catalysed reaction is [(1-&gt;4)-alpha-D-galacturonosyl methyl ester](n) + n H2O = [(1-&gt;4)-alpha-D-galacturonosyl](n) + n methanol + n H(+). It functions in the pathway glycan metabolism; pectin degradation; 2-dehydro-3-deoxy-D-gluconate from pectin: step 1/5. The protein is Pectinesterase of Capsicum chinense (Scotch bonnet).